Consider the following 439-residue polypeptide: Exodeoxyribonuclease 7 large subunit (439 aa).

It belongs to the XseA family. As to quaternary structure, heterooligomer composed of large and small subunits.

The protein resides in the cytoplasm. The enzyme catalyses Exonucleolytic cleavage in either 5'- to 3'- or 3'- to 5'-direction to yield nucleoside 5'-phosphates.. Bidirectionally degrades single-stranded DNA into large acid-insoluble oligonucleotides, which are then degraded further into small acid-soluble oligonucleotides. This Haemophilus influenzae (strain 86-028NP) protein is Exodeoxyribonuclease 7 large subunit.